The sequence spans 471 residues: Methylenetetrahydrofolate--tRNA-(uracil-5-)-methyltransferase TrmFO (471 aa).

9–14 (GGGLSG) is a binding site for FAD.

This sequence belongs to the MnmG family. TrmFO subfamily. Requires FAD as cofactor.

Its subcellular location is the cytoplasm. It carries out the reaction uridine(54) in tRNA + (6R)-5,10-methylene-5,6,7,8-tetrahydrofolate + NADH + H(+) = 5-methyluridine(54) in tRNA + (6S)-5,6,7,8-tetrahydrofolate + NAD(+). It catalyses the reaction uridine(54) in tRNA + (6R)-5,10-methylene-5,6,7,8-tetrahydrofolate + NADPH + H(+) = 5-methyluridine(54) in tRNA + (6S)-5,6,7,8-tetrahydrofolate + NADP(+). Functionally, catalyzes the folate-dependent formation of 5-methyl-uridine at position 54 (M-5-U54) in all tRNAs. In Beijerinckia indica subsp. indica (strain ATCC 9039 / DSM 1715 / NCIMB 8712), this protein is Methylenetetrahydrofolate--tRNA-(uracil-5-)-methyltransferase TrmFO.